Reading from the N-terminus, the 154-residue chain is Regulatory protein RecX (154 aa).

This sequence belongs to the RecX family.

It localises to the cytoplasm. Functionally, modulates RecA activity. The protein is Regulatory protein RecX of Trichlorobacter lovleyi (strain ATCC BAA-1151 / DSM 17278 / SZ) (Geobacter lovleyi).